The following is a 447-amino-acid chain: Methionine aminopeptidase 2 (447 aa).

The disordered stretch occupies residues Met-1–Ile-86. A compositionally biased stretch (basic and acidic residues) spans Glu-8–Glu-32. Residues Gly-43 to Thr-60 are compositionally biased toward acidic residues. The span at Lys-71 to Ile-86 shows a compositional bias: basic residues. Position 198 (His-198) interacts with substrate. 3 residues coordinate a divalent metal cation: Asp-218, Asp-229, and His-300. Residue His-308 participates in substrate binding. A divalent metal cation-binding residues include Glu-333 and Glu-428.

Belongs to the peptidase M24A family. Methionine aminopeptidase eukaryotic type 2 subfamily. Co(2+) serves as cofactor. The cofactor is Zn(2+). Requires Mn(2+) as cofactor. Fe(2+) is required as a cofactor.

The protein resides in the cytoplasm. The catalysed reaction is Release of N-terminal amino acids, preferentially methionine, from peptides and arylamides.. Functionally, cotranslationally removes the N-terminal methionine from nascent proteins. The N-terminal methionine is often cleaved when the second residue in the primary sequence is small and uncharged (Met-Ala-, Cys, Gly, Pro, Ser, Thr, or Val). In Candida albicans (strain WO-1) (Yeast), this protein is Methionine aminopeptidase 2.